A 341-amino-acid chain; its full sequence is NADH-quinone oxidoreductase subunit H (341 aa).

8 helical membrane passes run 16 to 36, 86 to 106, 119 to 139, 165 to 185, 191 to 211, 254 to 274, 276 to 296, and 315 to 335; these read LLII…AVAY, VVFV…WAVI, VGVL…IMAG, IGFI…SDVV, MWFI…GLAE, GAMT…LGWL, IPGL…FLWV, and VFLP…TAFG.

It belongs to the complex I subunit 1 family. In terms of assembly, NDH-1 is composed of 14 different subunits. Subunits NuoA, H, J, K, L, M, N constitute the membrane sector of the complex.

It localises to the cell inner membrane. It carries out the reaction a quinone + NADH + 5 H(+)(in) = a quinol + NAD(+) + 4 H(+)(out). Functionally, NDH-1 shuttles electrons from NADH, via FMN and iron-sulfur (Fe-S) centers, to quinones in the respiratory chain. The immediate electron acceptor for the enzyme in this species is believed to be ubiquinone. Couples the redox reaction to proton translocation (for every two electrons transferred, four hydrogen ions are translocated across the cytoplasmic membrane), and thus conserves the redox energy in a proton gradient. This subunit may bind ubiquinone. The protein is NADH-quinone oxidoreductase subunit H of Paramagnetospirillum magneticum (strain ATCC 700264 / AMB-1) (Magnetospirillum magneticum).